The chain runs to 820 residues: DNA gyrase subunit A (820 aa).

Residues 31 to 496 (IPDVRDGLKP…TLTNIEIEDL (466 aa)) enclose the Topo IIA-type catalytic domain. Residue Tyr-119 is the O-(5'-phospho-DNA)-tyrosine intermediate of the active site. A GyrA-box motif is present at residues 523-529 (QRRGGKG).

It belongs to the type II topoisomerase GyrA/ParC subunit family. In terms of assembly, heterotetramer, composed of two GyrA and two GyrB chains. In the heterotetramer, GyrA contains the active site tyrosine that forms a transient covalent intermediate with DNA, while GyrB binds cofactors and catalyzes ATP hydrolysis.

The protein resides in the cytoplasm. The catalysed reaction is ATP-dependent breakage, passage and rejoining of double-stranded DNA.. In terms of biological role, a type II topoisomerase that negatively supercoils closed circular double-stranded (ds) DNA in an ATP-dependent manner to modulate DNA topology and maintain chromosomes in an underwound state. Negative supercoiling favors strand separation, and DNA replication, transcription, recombination and repair, all of which involve strand separation. Also able to catalyze the interconversion of other topological isomers of dsDNA rings, including catenanes and knotted rings. Type II topoisomerases break and join 2 DNA strands simultaneously in an ATP-dependent manner. The protein is DNA gyrase subunit A of Lawsonia intracellularis (strain PHE/MN1-00).